We begin with the raw amino-acid sequence, 1063 residues long: Error-prone DNA polymerase (1063 aa).

This sequence belongs to the DNA polymerase type-C family. DnaE2 subfamily.

It localises to the cytoplasm. It carries out the reaction DNA(n) + a 2'-deoxyribonucleoside 5'-triphosphate = DNA(n+1) + diphosphate. Functionally, DNA polymerase involved in damage-induced mutagenesis and translesion synthesis (TLS). It is not the major replicative DNA polymerase. The protein is Error-prone DNA polymerase of Burkholderia mallei (strain ATCC 23344).